A 585-amino-acid polypeptide reads, in one-letter code: MAGUK p55 subfamily member 3 (585 aa).

2 consecutive L27 domains span residues 6-60 (EDSG…ERQS) and 61-118 (PTPV…FDPV). One can recognise a PDZ domain in the interval 137-218 (IVRLVKNKEP…SITLKIIPAT (82 aa)). Positions 226-296 (ESKVFMRALF…PSKQFQERRL (71 aa)) constitute an SH3 domain. Ser-307 is subject to Phosphoserine. Residues 385–570 (SRLVVLIGSL…VCSQLRAVIE (186 aa)) enclose the Guanylate kinase-like domain. The interval 510 to 530 (KRKTPPVSPDSEDPATPLDEQ) is disordered.

It belongs to the MAGUK family. In terms of assembly, interacts with HTR2C; this interaction stabilizes the receptor at the plasma membrane and prevents the desensitization of the HTR2C receptor-mediated calcium response. Interacts with HTR2A. Interacts with HTR4. Interacts (via PDZ domain) with CADM1 (via C-terminus)Interacts (via PDZ domain) with CADM1; this interaction connects CADM1 with DLG1. Interacts (via Guanylate kinase-like domain) with PALS1. Interacts with DLG1 (via N-terminus); this interaction connects CADM1 with DLG1 and links CADM1 with the regulatory subunit of phosphoinositide-3-kinase (PI3K) by forming a multiprotein complex and participates in cell spreading.

The protein localises to the apical cell membrane. It is found in the cell membrane. It localises to the cell junction. Its subcellular location is the adherens junction. Its function is as follows. Participates in cell spreading through the phosphoinositide-3-kinase (PI3K) pathway by connecting CADM1 to DLG1 and the regulatory subunit of phosphoinositide-3-kinase (PI3K). Stabilizes HTR2C at the plasma membrane and prevents its desensitization. May participates in the maintenance of adherens junctions. This Rattus norvegicus (Rat) protein is MAGUK p55 subfamily member 3.